Here is a 359-residue protein sequence, read N- to C-terminus: Serum paraoxonase/arylesterase 1 (359 aa).

Cys42 and Cys353 are joined by a disulfide. Asn50 carries N-linked (GlcNAc...) asparagine glycosylation. Residues Glu53 and Asp54 each coordinate Ca(2+). Residue His115 is the Proton acceptor of the active site. 4 residues coordinate Ca(2+): Ile117, Asn168, Asp169, and Asn224. N-linked (GlcNAc...) asparagine glycosylation occurs at Asn253. The Ca(2+) site is built by Asp269 and Asn270. Asn270 and Asn324 each carry an N-linked (GlcNAc...) asparagine glycan.

The protein belongs to the paraoxonase family. Homodimer. Interacts with CLU. It depends on Ca(2+) as a cofactor. Post-translationally, glycosylated. In terms of processing, the signal sequence is not cleaved. As to expression, plasma. Associated with HDL.

It localises to the secreted. The protein localises to the extracellular space. The catalysed reaction is a phenyl acetate + H2O = a phenol + acetate + H(+). The enzyme catalyses An aryl dialkyl phosphate + H2O = dialkyl phosphate + an aryl alcohol.. It carries out the reaction an N-acyl-L-homoserine lactone + H2O = an N-acyl-L-homoserine + H(+). Hydrolyzes the toxic metabolites of a variety of organophosphorus insecticides. Capable of hydrolyzing a broad spectrum of organophosphate substrates and lactones, and a number of aromatic carboxylic acid esters. Mediates an enzymatic protection of low density lipoproteins against oxidative modification. This Oryctolagus cuniculus (Rabbit) protein is Serum paraoxonase/arylesterase 1 (PON1).